We begin with the raw amino-acid sequence, 114 residues long: Amphinase-4 (114 aa).

His15 functions as the Proton acceptor in the catalytic mechanism. 4 disulfides stabilise this stretch: Cys26–Cys79, Cys41–Cys85, Cys59–Cys100, and Cys97–Cys114. N-linked (GlcNAc...) asparagine glycosylation is present at Asn27. Position 42-46 (42-46) interacts with substrate; the sequence is KPVNT. N-linked (GlcNAc...) asparagine glycosylation is found at Asn67 and Asn91. The Proton donor role is filled by His107.

It belongs to the pancreatic ribonuclease family. In terms of assembly, monomer. In terms of processing, there are at least five different forms arising from glycan heterogeneity.

The protein localises to the secreted. Functionally, endonuclease, hydrolyzes highly polymerized RNA, poly(U) and poly(C), and the dinucleotides CpA and UpA. Hydrolyzes rCA, rUA and rUG. Has cytotoxic activity against cultured human submaxillary gland carcinoma cells. The chain is Amphinase-4 from Lithobates pipiens (Northern leopard frog).